The chain runs to 397 residues: T-box transcription factor TBX19 (397 aa).

The T-box DNA-binding region spans 48–216 (LWQRFREVTN…YNPFAKAFLD (169 aa)). Residues 220–248 (RNHPKDAPEAASEGQHMTYSHSPQAPHGC) form a disordered region.

The protein localises to the nucleus. Functionally, may be involved in the initial formation of the chordamesoderm. The sequence is that of T-box transcription factor TBX19 from Gallus gallus (Chicken).